Here is a 325-residue protein sequence, read N- to C-terminus: NADH-quinone oxidoreductase subunit H (325 aa).

Transmembrane regions (helical) follow at residues 11-31 (ILLT…CGAF), 81-101 (VIFT…FAIV), 114-134 (IGIL…LFAG), 154-174 (LSYE…AGSF), 186-206 (VWNV…GVAV), 237-257 (FFVG…TLFF), 265-285 (LPPF…FILI), and 304-324 (ICLP…LWQA).

The protein belongs to the complex I subunit 1 family. As to quaternary structure, NDH-1 is composed of 13 different subunits. Subunits NuoA, H, J, K, L, M, N constitute the membrane sector of the complex.

The protein localises to the cell inner membrane. The catalysed reaction is a quinone + NADH + 5 H(+)(in) = a quinol + NAD(+) + 4 H(+)(out). Functionally, NDH-1 shuttles electrons from NADH, via FMN and iron-sulfur (Fe-S) centers, to quinones in the respiratory chain. The immediate electron acceptor for the enzyme in this species is believed to be ubiquinone. Couples the redox reaction to proton translocation (for every two electrons transferred, four hydrogen ions are translocated across the cytoplasmic membrane), and thus conserves the redox energy in a proton gradient. This subunit may bind ubiquinone. The protein is NADH-quinone oxidoreductase subunit H of Escherichia fergusonii (strain ATCC 35469 / DSM 13698 / CCUG 18766 / IAM 14443 / JCM 21226 / LMG 7866 / NBRC 102419 / NCTC 12128 / CDC 0568-73).